The primary structure comprises 172 residues: 3-hydroxydecanoyl-[acyl-carrier-protein] dehydratase (172 aa).

His71 is an active-site residue.

The protein belongs to the thioester dehydratase family. FabA subfamily. In terms of assembly, homodimer.

It is found in the cytoplasm. The catalysed reaction is a (3R)-hydroxyacyl-[ACP] = a (2E)-enoyl-[ACP] + H2O. It catalyses the reaction (3R)-hydroxydecanoyl-[ACP] = (2E)-decenoyl-[ACP] + H2O. It carries out the reaction (2E)-decenoyl-[ACP] = (3Z)-decenoyl-[ACP]. The protein operates within lipid metabolism; fatty acid biosynthesis. Functionally, necessary for the introduction of cis unsaturation into fatty acids. Catalyzes the dehydration of (3R)-3-hydroxydecanoyl-ACP to E-(2)-decenoyl-ACP and then its isomerization to Z-(3)-decenoyl-ACP. Can catalyze the dehydratase reaction for beta-hydroxyacyl-ACPs with saturated chain lengths up to 16:0, being most active on intermediate chain length. The polypeptide is 3-hydroxydecanoyl-[acyl-carrier-protein] dehydratase (Cronobacter sakazakii (strain ATCC BAA-894) (Enterobacter sakazakii)).